The chain runs to 150 residues: Large ribosomal subunit protein bL9 (150 aa).

This sequence belongs to the bacterial ribosomal protein bL9 family.

In terms of biological role, binds to the 23S rRNA. The protein is Large ribosomal subunit protein bL9 of Shewanella oneidensis (strain ATCC 700550 / JCM 31522 / CIP 106686 / LMG 19005 / NCIMB 14063 / MR-1).